We begin with the raw amino-acid sequence, 1905 residues long: Bromodomain adjacent to zinc finger domain protein 2A (1905 aa).

2 disordered regions span residues methionine 1–serine 59 and threonine 362–serine 434. Polar residues-rich tracts occupy residues threonine 35 to serine 59, leucine 379 to aspartate 391, and threonine 399 to glutamine 420. Position 507 is a phosphothreonine (threonine 507). Residue serine 509 is modified to Phosphoserine. In terms of domain architecture, MBD spans isoleucine 546–proline 617. Threonine 548 is subject to Phosphothreonine. The residue at position 613 (serine 613) is a Phosphoserine. The tract at residues isoleucine 648 to lysine 792 is disordered. 2 DNA-binding regions (a.T hook) span residues threonine 649 to alanine 661 and lysine 670 to threonine 682. Residues arginine 656–lysine 668 are compositionally biased toward basic and acidic residues. The segment covering valine 669–lysine 678 has biased composition (basic residues). Lysine 680 is modified (N6-acetyllysine; by KAT8). A compositionally biased stretch (basic and acidic residues) spans asparagine 686 to lysine 709. A coiled-coil region spans residues leucine 693 to lysine 792. The span at isoleucine 710–valine 721 shows a compositional bias: basic residues. A compositionally biased stretch (polar residues) spans glutamate 725–alanine 734. Composition is skewed to basic and acidic residues over residues lysine 739 to lysine 748 and alanine 756 to lysine 792. At lysine 799 the chain carries N6-acetyllysine. The DDT domain occupies serine 848 to phenylalanine 913. Lysine 866 participates in a covalent cross-link: Glycyl lysine isopeptide (Lys-Gly) (interchain with G-Cter in SUMO2). Serine 1051 is subject to Phosphoserine. Residues lysine 1150 and lysine 1172 each participate in a glycyl lysine isopeptide (Lys-Gly) (interchain with G-Cter in SUMO2) cross-link. Disordered regions lie at residues serine 1178–glutamine 1220, leucine 1283–aspartate 1318, and methionine 1330–serine 1412. Residue serine 1184 is modified to Phosphoserine. A DNA-binding region (a.T hook 3) is located at residues alanine 1186–glycine 1198. Positions leucine 1283–serine 1293 are enriched in low complexity. Over residues glutamate 1306–serine 1315 the composition is skewed to acidic residues. Over residues aspartate 1345–proline 1359 the composition is skewed to polar residues. Serine 1397 carries the phosphoserine modification. The segment at residues proline 1404 to lysine 1416 is a DNA-binding region (a.T hook 4). Serine 1559 carries the phosphoserine modification. Residues lysine 1676 and lysine 1709 each participate in a glycyl lysine isopeptide (Lys-Gly) (interchain with G-Cter in SUMO2) cross-link. Residues lysine 1676–glutamine 1726 form a PHD-type zinc finger. Disordered stretches follow at residues glutamine 1734–glutamate 1755 and glutamate 1769–arginine 1789. Phosphoserine is present on residues serine 1747, serine 1770, serine 1783, and serine 1785. The 105-residue stretch at arginine 1793 to phenylalanine 1897 folds into the Bromo domain.

Belongs to the WAL family. Component of the NoRC-1 ISWI chromatin remodeling complex at least composed of SMARCA1 and BAZ2A/TIP5, which regulates the spacing of histone octamers on the DNA template to facilitate access to DNA. Within the NoRC-1 ISWI chromatin remodeling complex interacts with SMARCA1; the interaction is direct. Component of the NoRC-5 ISWI chromatin remodeling complex (also called the NoRC nucleolar-remodeling complex), at least composed of SMARCA5/SNF2H and BAZ2A/TIP5, which regulates the spacing of histone octamers on the DNA template to facilitate access to DNA. Within the NoRC-5 ISWI chromatin remodeling complexes interacts with SMARCA5/SNF2H; the interaction is direct. Interacts with TTF1; the interaction is required for recruitment of the NoRC-5 ISWI chromatin remodeling complex to rDNA. Interacts with HDAC1. Interacts with SIN3A. Interacts with DNMT1 and DNM3B. Interacts with BEND3 and USP21. Acetylation at Lys-680 by KAT8/MOF promotes its dissociation from pRNA, affecting heterochromatin formation, nucleosome positioning and rDNA silencing. Deacetylation by SIRT1 in late S phase enhances pRNA-binding, allowing de novo DNA methylation and heterochromatin formation. Acetylation is high during S phase and declines to background levels in late S phase when the silent copies of rRNA genes are replicated. Post-translationally, ubiquitinated. Deubiquitinated by USP21 leading to its stabilization. Expressed at moderate levels in most tissues analyzed, including heart, brain, placenta, lung, skeletal muscle, kidney and pancreas.

The protein resides in the nucleus. It localises to the nucleolus. Regulatory subunit of the ATP-dependent NoRC-1 and NoRC-5 ISWI chromatin remodeling complexes, which form ordered nucleosome arrays on chromatin and facilitate access to DNA during DNA-templated processes such as DNA replication, transcription, and repair. Both complexes regulate the spacing of nucleosomes along the chromatin and have the ability to slide mononucleosomes to the center of a DNA template. Directly stimulates the ATPase activity of SMARCA5 in the NoRC-5 ISWI chromatin remodeling complex. The NoRC-1 ISWI chromatin remodeling complex has a lower ATP hydrolysis rate than the NoRC-5 ISWI chromatin remodeling complex. Within the NoRC-5 ISWI chromatin remodeling complex, mediates silencing of a fraction of rDNA by recruiting histone-modifying enzymes and DNA methyltransferases, leading to heterochromatin formation and transcriptional silencing. In the complex, it plays a central role by being recruited to rDNA and by targeting chromatin modifying enzymes such as HDAC1, leading to repress RNA polymerase I transcription. Recruited to rDNA via its interaction with TTF1 and its ability to recognize and bind histone H4 acetylated on 'Lys-16' (H4K16ac), leading to deacetylation of H4K5ac, H4K8ac, H4K12ac but not H4K16ac. Specifically binds pRNAs, 150-250 nucleotide RNAs that are complementary in sequence to the rDNA promoter; pRNA-binding is required for heterochromatin formation and rDNA silencing. The protein is Bromodomain adjacent to zinc finger domain protein 2A (BAZ2A) of Homo sapiens (Human).